Here is a 134-residue protein sequence, read N- to C-terminus: Phosphoribosyl-AMP cyclohydrolase (134 aa).

Asp93 is a Mg(2+) binding site. Residue Cys94 coordinates Zn(2+). Asp95 and Asp97 together coordinate Mg(2+). Zn(2+) contacts are provided by Cys112 and Cys119.

This sequence belongs to the PRA-CH family. As to quaternary structure, homodimer. Mg(2+) serves as cofactor. Requires Zn(2+) as cofactor.

It is found in the cytoplasm. It catalyses the reaction 1-(5-phospho-beta-D-ribosyl)-5'-AMP + H2O = 1-(5-phospho-beta-D-ribosyl)-5-[(5-phospho-beta-D-ribosylamino)methylideneamino]imidazole-4-carboxamide. Its pathway is amino-acid biosynthesis; L-histidine biosynthesis; L-histidine from 5-phospho-alpha-D-ribose 1-diphosphate: step 3/9. Its function is as follows. Catalyzes the hydrolysis of the adenine ring of phosphoribosyl-AMP. This is Phosphoribosyl-AMP cyclohydrolase from Caulobacter sp. (strain K31).